The chain runs to 162 residues: Ribosome maturation factor RimP (162 aa).

It belongs to the RimP family.

It localises to the cytoplasm. In terms of biological role, required for maturation of 30S ribosomal subunits. This chain is Ribosome maturation factor RimP, found in Leptospira borgpetersenii serovar Hardjo-bovis (strain JB197).